The following is a 135-amino-acid chain: MLSPKRTRFRKQHRGRMKGISYRGNAICFGKYALQALEPAWITSRQIEAGRRAMTRNARRGGKIWVRIFPDKPVTVRPAETRMGSGKGSPEYWVAVVKPGRILYEMGGVTENIARRAISIAASKMPIRAQFIISG.

It belongs to the universal ribosomal protein uL16 family. In terms of assembly, part of the 50S ribosomal subunit.

It is found in the plastid. The protein resides in the chloroplast. The polypeptide is Large ribosomal subunit protein uL16c (Lactuca sativa (Garden lettuce)).